The primary structure comprises 61 residues: Tryptophyllin-T1 (61 aa).

The N-terminal stretch at 1–22 is a signal peptide; it reads MDFLKKSLFLVLFLGLVSISLC. A propeptide spanning residues 23-53 is cleaved from the precursor; that stretch reads DEEKRQDDDEASEREEKKEIHEEGNQEERRD. The segment at 25 to 61 is disordered; sequence EKRQDDDEASEREEKKEIHEEGNQEERRDRPPSWIPK. The span at 36 to 55 shows a compositional bias: basic and acidic residues; sequence REEKKEIHEEGNQEERRDRP. P56 is modified (4-hydroxyproline; partial).

Belongs to the frog skin active peptide (FSAP) family. Tryptophillin subfamily. Expressed by the skin glands.

It localises to the secreted. This is Tryptophyllin-T1 from Pithecopus azureus (Orange-legged monkey tree frog).